A 366-amino-acid polypeptide reads, in one-letter code: Hydroxyproline O-arabinosyltransferase 1 (366 aa).

Residues 6-26 (TLFYPLLITLSVALITYNIII) traverse the membrane as a helical; Signal-anchor segment.

In terms of tissue distribution, ubiquitous.

The protein resides in the golgi apparatus. Its subcellular location is the cis-Golgi network membrane. It catalyses the reaction trans-4-hydroxy-L-prolyl-[protein] + UDP-beta-L-arabinofuranose = O-(beta-L-arabinofuranosyl)-trans-4-hydroxy-L-prolyl-[protein] + UDP + H(+). In terms of biological role, glycosyltransferase involved in the O-arabinosylation of several proteins including extensins and small signaling peptides. Catalyzes the transfer of the initial L-arabinose to the hydroxyl group of Hyp residues. Contributes redundantly with HPAT2 and HPAT3 to arabinosylation of EXT3. The protein is Hydroxyproline O-arabinosyltransferase 1 of Arabidopsis thaliana (Mouse-ear cress).